The primary structure comprises 126 residues: Small ribosomal subunit protein uS12 (126 aa).

The disordered stretch occupies residues 1 to 28 (MPTINQLVRKGRQSETTKSKSPALQDCP). D89 is modified (3-methylthioaspartic acid). A disordered region spans residues 103–126 (DTQGVKDRKQARSKYGAKRAKAAK). The span at 113-126 (ARSKYGAKRAKAAK) shows a compositional bias: basic residues.

Belongs to the universal ribosomal protein uS12 family. Part of the 30S ribosomal subunit. Contacts proteins S8 and S17. May interact with IF1 in the 30S initiation complex.

Functionally, with S4 and S5 plays an important role in translational accuracy. Its function is as follows. Interacts with and stabilizes bases of the 16S rRNA that are involved in tRNA selection in the A site and with the mRNA backbone. Located at the interface of the 30S and 50S subunits, it traverses the body of the 30S subunit contacting proteins on the other side and probably holding the rRNA structure together. The combined cluster of proteins S8, S12 and S17 appears to hold together the shoulder and platform of the 30S subunit. In Burkholderia orbicola (strain MC0-3), this protein is Small ribosomal subunit protein uS12.